We begin with the raw amino-acid sequence, 566 residues long: MAWRNQGITGSNNIPLGRRRFGGEDGPEEESRTATPASVGGDNGIKRGRSPVRADPPADGVKRRKKRNRWGDAQENKAAGLMGLPTMIMANFTNEQLEAYTLHLRIEEISQKLRINDVVPADGDRSPSPPPQYDNFGRRVNTREYRYRKRLEDERHKLVEKAMKTIPNYHPPSDYRRPTKTQEKVYVPVNDYPEINFIGLLIGPRGNTLKKMEAESGAKIAIRGKGSVKEGKGRSDAAHASNQEEDLHCLIMADTEEKVNKAKKLVHNVIETAASIPEGQNELKRNQLRELAALNGTLRDDENQACQNCGQIGHRKYDCPEQRNFTANIICRVCGNAGHMARDCPDRQRGSDWRNGGGYGGGRRAIGQGDAVDREMEQLMQELSGGAPGPDGQPPRRIEAGPDHGYDDRDVKPWQRGPPPSDVAPWQQRGRDNRSRDDYGSRDQGSAPPWAAQSRGGDYGYGSHAGGYGAPGAGAATSGAAPWHQQAPPPPPGGASAYGYGAYPGYGAAVPGMGAPGAPPGLSVPPPPPGMPSMYYGSGSPPPPPPGEGPPPPPPSELPPPPPPSA.

Over residues 1–14 (MAWRNQGITGSNNI) the composition is skewed to polar residues. A disordered region spans residues 1 to 77 (MAWRNQGITG…NRWGDAQENK (77 aa)). The KH domain maps to 186-266 (YVPVNDYPEI…EKVNKAKKLV (81 aa)). 2 consecutive CCHC-type zinc fingers follow at residues 304–321 (QACQ…DCPE) and 329–346 (IICR…DCPD). Basic and acidic residues predominate over residues 341–352 (ARDCPDRQRGSD). Disordered stretches follow at residues 341-367 (ARDC…RAIG) and 382-566 (ELSG…PPSA). The segment covering 355-364 (NGGGYGGGRR) has biased composition (gly residues). Basic and acidic residues-rich tracts occupy residues 394 to 413 (PPRR…DVKP) and 429 to 441 (RGRD…DYGS). A compositionally biased stretch (gly residues) spans 457–472 (GDYGYGSHAGGYGAPG). Low complexity-rich tracts occupy residues 473–486 (AGAA…WHQQ) and 494–513 (GASA…VPGM). Composition is skewed to pro residues over residues 517–531 (GAPP…PPGM) and 540–566 (SPPP…PPSA).

It belongs to the BBP/SF1 family.

The protein resides in the nucleus. In terms of biological role, necessary for the splicing of pre-mRNA. Has a role in the recognition of the branch site (5'-UACUAAC-3'), the pyrimidine tract and the 3'-splice site at the 3'-end of introns. The protein is Branchpoint-bridging protein (bbp) of Aspergillus fumigatus (strain ATCC MYA-4609 / CBS 101355 / FGSC A1100 / Af293) (Neosartorya fumigata).